The following is a 223-amino-acid chain: Endonuclease NucS (223 aa).

It belongs to the NucS endonuclease family.

It is found in the cytoplasm. In terms of biological role, cleaves both 3' and 5' ssDNA extremities of branched DNA structures. In Streptomyces coelicolor (strain ATCC BAA-471 / A3(2) / M145), this protein is Endonuclease NucS.